The sequence spans 638 residues: Neuroendocrine convertase 2 (638 aa).

Residues 1–25 (MRGGCISQGKAAAGLLFCVMVFASA) form the signal peptide. The propeptide occupies 26–109 (ERPVFTNHFL…QQEGFNRKKR (84 aa)). In terms of domain architecture, Peptidase S8 spans 129–453 (QWYLINTGQA…YGVLDAGAMV (325 aa)). Active-site charge relay system residues include Asp167 and His208. 2 disulfides stabilise this stretch: Cys225–Cys376 and Cys317–Cys347. An N-linked (GlcNAc...) asparagine glycan is attached at Asn375. Ser384 (charge relay system) is an active-site residue. The P/Homo B domain maps to 461–597 (TVPERFHCVG…TLMLHGTQSA (137 aa)). The cysteines at positions 468 and 494 are disulfide-linked. N-linked (GlcNAc...) asparagine glycans are attached at residues Asn514 and Asn524.

The protein belongs to the peptidase S8 family. Furin subfamily.

It is found in the cytoplasmic vesicle. The protein resides in the secretory vesicle. The protein localises to the secreted. It catalyses the reaction Release of protein hormones and neuropeptides from their precursors, generally by hydrolysis of -Lys-Arg-|- bonds.. Its function is as follows. Serine endopeptidase which is involved in the processing of hormone and other protein precursors at sites comprised of pairs of basic amino acid residues. Responsible for the release of glucagon from proglucagon in pancreatic A cells. The protein is Neuroendocrine convertase 2 (PCSK2) of Bos taurus (Bovine).